The chain runs to 244 residues: Nuclear protein UL4 homolog (244 aa).

The segment at Arg-193–Phe-227 is disordered. Polar residues predominate over residues His-205–Ser-220.

This sequence belongs to the alphaherpesvirinae HHV-1 UL4 family.

It is found in the host nucleus. In Varicella-zoster virus (strain Dumas) (HHV-3), this protein is Nuclear protein UL4 homolog.